A 45-amino-acid chain; its full sequence is Psychimicin (45 aa).

Cystine bridges form between C10/C24, C14/C36, and C25/C42.

Monomer. Hemolymph.

It localises to the secreted. Functionally, has antimicrobial activity. Is particularly active against fungi, and to a lesser extent against Gram-positive and Gram-negative bacteria. This is Psychimicin from Oiketicus kirbyi (Bagworm moth).